A 1080-amino-acid chain; its full sequence is MHIIKPSWLRHSGEQKDFEVYSCHISPDGSRLATAGGDGHVRVWSTKAIFNADHPDHGKPRQLCHMSHHLGTIHSVRFSPNGRYLASGADDRVICIYQLDSNPPSHTATFGTNEPPPVENWKTHKRLVGHDSDVQDLAWSYDNSILVSVGLDSKVVVWSGHTFEKLKTIAVHQSHVKGITFDPANKFFATAGDDRHIKIFRFTPPPPNATQHDMVNNFVLETTISAPFKSSPLTTYFRRCSWSPDGNHIAAANAVNGPVSSVAIIERSRWDSEINLIGHEGPTEVCMFSPRLFHTQKPSDNATDKGSPGLVTVIASAGQDKTLSIWNTNTSRPVVILQDVASKSMSDLAWTPDGQTLFASSLDGTILAVKFEMGELGWVATAEENDKALQKYGGSRKGMGTAEDVDGLHLENHSKEGELRGAESRMGALMGDFQPEDKGKPVTTNGSRPTAKNGEANGTTEPKEKEAPKAAPAEENVEKTAERIAELKSRVQVTKDGKKRVAPLLVSSSATGLLSLPQSQLVGAKSTKTTQSDTPQTILDLSKPSHGLPRGGIAAMLLGNKRKAAAMEGEEEDELAGRRPSAGPVPILIDTPEGLEPAPLSAPAQGVVPTPEYLRPAVISPAISFSQTRLAVPKVRSHIVRPLEKGVLQGESTLDEASKVPENIVLEAKNPIRLREPAHISASKRGARLWQDYLPRAIILVTGNKHFWAAACEDGSVHTWTPAGRRLLNGIILESQPVILESREHWLLCITSVGLCHVFNIKTMSAAHPPVSLAPILDIAITSLSLEGPTPAPGVTSAHLNSVGAVVVTLSNGDGFYYSSTMYAWQRLSESWWALGSQYWNSNDSSISALSTTAVGPVTAKNINGTASSTTTTTTPDKPDTAATAEVGVSAGIIPHLERHTTSEFLLKGRAFTLQRLIKTLLSKDGFEGFESTVSVAHLENRIAGALALGAREEFRLYLFMYAKRIGAEGLRGKVEELLNCLVGGLLQQKGAPTNGGGGSGEAKGWFGKGEMLGGWERRELLKGVVLILGKFRDLQRLTVQYARILGLTADGEDEENDDNNGGGGGENGAVAEEMELEEQ.

WD repeat units follow at residues 15–54 (QKDF…NADH), 68–107 (HHLG…PSHT), 129–168 (GHDS…KLKT), 171–210 (VHQS…PNAT), 232–275 (PLTT…SEIN), 278–336 (GHEG…PVVI), and 340–381 (VASK…WVAT). 3 disordered regions span residues 430 to 479 (MGDF…NVEK), 520 to 546 (QLVG…KPSH), and 1051 to 1080 (DGED…LEEQ). Residues 442-460 (VTTNGSRPTAKNGEANGTT) show a composition bias toward polar residues. Positions 469 to 496 (KAAPAEENVEKTAERIAELKSRVQVTKD) form a coiled coil. Polar residues predominate over residues 520–539 (QLVGAKSTKTTQSDTPQTIL).

The protein belongs to the WD repeat HIR1 family.

It is found in the nucleus. Required for replication-independent chromatin assembly and for the periodic repression of histone gene transcription during the cell cycle. The sequence is that of Protein HIR1 (HIR1) from Chaetomium globosum (strain ATCC 6205 / CBS 148.51 / DSM 1962 / NBRC 6347 / NRRL 1970) (Soil fungus).